Reading from the N-terminus, the 283-residue chain is 1D-myo-inositol 2-acetamido-2-deoxy-alpha-D-glucopyranoside deacetylase (283 aa).

Residues histidine 7, aspartate 10, and histidine 148 each coordinate Zn(2+).

This sequence belongs to the MshB deacetylase family. Zn(2+) serves as cofactor.

It carries out the reaction 1D-myo-inositol 2-acetamido-2-deoxy-alpha-D-glucopyranoside + H2O = 1D-myo-inositol 2-amino-2-deoxy-alpha-D-glucopyranoside + acetate. Catalyzes the deacetylation of 1D-myo-inositol 2-acetamido-2-deoxy-alpha-D-glucopyranoside (GlcNAc-Ins) in the mycothiol biosynthesis pathway. This Gordonia bronchialis (strain ATCC 25592 / DSM 43247 / BCRC 13721 / JCM 3198 / KCTC 3076 / NBRC 16047 / NCTC 10667) (Rhodococcus bronchialis) protein is 1D-myo-inositol 2-acetamido-2-deoxy-alpha-D-glucopyranoside deacetylase.